The sequence spans 377 residues: Homocitrate synthase 1 (377 aa).

The 252-residue stretch at 4 to 255 folds into the Pyruvate carboxyltransferase domain; it reads VLINDTTLRD…DMGIDTPRLL (252 aa).

It belongs to the alpha-IPM synthase/homocitrate synthase family.

The enzyme catalyses acetyl-CoA + 2-oxoglutarate + H2O = (2R)-homocitrate + CoA + H(+). This protein is a Fe-Mo-cofactor biosynthetic component. The protein is Homocitrate synthase 1 (nifV1) of Nostoc sp. (strain PCC 7120 / SAG 25.82 / UTEX 2576).